A 417-amino-acid polypeptide reads, in one-letter code: NADH-quinone oxidoreductase subunit D (417 aa).

The protein belongs to the complex I 49 kDa subunit family. As to quaternary structure, NDH-1 is composed of 14 different subunits. Subunits NuoB, C, D, E, F, and G constitute the peripheral sector of the complex.

Its subcellular location is the cell inner membrane. It catalyses the reaction a quinone + NADH + 5 H(+)(in) = a quinol + NAD(+) + 4 H(+)(out). Functionally, NDH-1 shuttles electrons from NADH, via FMN and iron-sulfur (Fe-S) centers, to quinones in the respiratory chain. The immediate electron acceptor for the enzyme in this species is believed to be ubiquinone. Couples the redox reaction to proton translocation (for every two electrons transferred, four hydrogen ions are translocated across the cytoplasmic membrane), and thus conserves the redox energy in a proton gradient. The sequence is that of NADH-quinone oxidoreductase subunit D from Francisella tularensis subsp. tularensis (strain FSC 198).